A 317-amino-acid polypeptide reads, in one-letter code: Melanocyte-stimulating hormone receptor (317 aa).

Residues 1 to 37 (MPAQGSQRGLLGAVNFTPTATPHLRPAANQTGPQCLE) are Extracellular-facing. A glycan (N-linked (GlcNAc...) asparagine) is linked at asparagine 29. Residues 38-63 (VSVPDGLFLCLGLVSLVENTLVVAAI) form a helical membrane-spanning segment. Residues 64 to 72 (AKNRNLHSP) lie on the Cytoplasmic side of the membrane. Residues 73-93 (MYCFICCLALSDLLVSVSNLL) traverse the membrane as a helical segment. Residues 94–118 (ETAVLLLLEVGALAAQATVVQQLGN) are Extracellular-facing. A helical transmembrane segment spans residues 119-140 (VIDVLICSSMVSSLCSLGAIAM). Topologically, residues 141–163 (DRYISIFYALRYHSIVTLARARR) are cytoplasmic. Residues 164–183 (AIAAVWAASILSSTLFITYY) form a helical membrane-spanning segment. Topologically, residues 184-191 (DRTAALLC) are extracellular. A helical transmembrane segment spans residues 192–211 (LVVFFLAMLVLMALLYVHML). Residues 212-240 (IQACQHAQAIARLHKRQHPVQQGWGLKGA) are Cytoplasmic-facing. Residues 241–266 (ATLTILLGVFFLCWGPFFLHLTLIAV) form a helical membrane-spanning segment. Residues 267 to 279 (CPQHPTCSCIFKN) are Extracellular-facing. A helical membrane pass occupies residues 280 to 300 (FRLFLALIICNTIVDPLIYAF). At 301–317 (RSQELRRTLKEVLLFSW) the chain is on the cytoplasmic side.

The protein belongs to the G-protein coupled receptor 1 family. In terms of assembly, interacts with MGRN1, but does not undergo MGRN1-mediated ubiquitination; this interaction competes with GNAS-binding and thus inhibits agonist-induced cAMP production. Interacts with OPN3; the interaction results in a decrease in MC1R-mediated cAMP signaling and ultimately a decrease in melanin production in melanocytes.

The protein localises to the cell membrane. Receptor for MSH (alpha, beta and gamma) and ACTH. The activity of this receptor is mediated by G proteins which activate adenylate cyclase. Mediates melanogenesis, the production of eumelanin (black/brown) and phaeomelanin (red/yellow), via regulation of cAMP signaling in melanocytes. The sequence is that of Melanocyte-stimulating hormone receptor (MC1R) from Eulemur fulvus fulvus (Brown lemur).